Consider the following 41-residue polypeptide: Photosystem I reaction center subunit IX (41 aa).

The helical transmembrane segment at 7-27 (YLSTAPVLTLVSLTAVAGLLI) threads the bilayer.

Belongs to the PsaJ family.

The protein localises to the plastid. It is found in the chloroplast thylakoid membrane. May help in the organization of the PsaE and PsaF subunits. The chain is Photosystem I reaction center subunit IX from Chlorella vulgaris (Green alga).